The primary structure comprises 139 residues: HTH-type transcriptional repressor Mb2911 (139 aa).

The 133-residue stretch at 6-138 (DAPLGYLLYR…FKRMLEKLGS (133 aa)) folds into the HTH marR-type domain.

In terms of assembly, homodimer.

Functionally, represses expression of the HQNO methyltransferase htm gene by binding to its promoter region. This is HTH-type transcriptional repressor Mb2911 from Mycobacterium bovis (strain ATCC BAA-935 / AF2122/97).